The sequence spans 328 residues: MGSDFKAIPLIDISPLVGKIDDPSMVNDEDLLQVVQMLDDACREAGFFYVKGHGIADSLMKQVRDVTQKFFQLPYEEKLKIKMTPQSGYRGYQRVGENITKGKPDMHEAIDCYTPIEPGKYGDLAKPMVGSNLWPKYPSNFDVLLENYISLLRDLSRKIMRGIALALGAPVDAFEGTTAGDPFWVCRLIGYPVSTDIPEEQRTDTGCGAHTDYGLLTLVNQDDDICALEVRNQSGEWIYAKPIPGTFVCNIGDMLKVWSNGIYQPTLHRVVNNSPRYRVSVAFFYESNFDAAVEPVEFCRERTGGVAKYEKVVYGEHLVQKVLTNFVM.

The Fe2OG dioxygenase domain occupies 183–288 (FWVCRLIGYP…VSVAFFYESN (106 aa)). Fe cation is bound by residues histidine 210, aspartate 212, and histidine 268. Arginine 278 provides a ligand contact to 2-oxoglutarate.

Belongs to the iron/ascorbate-dependent oxidoreductase family. Requires Fe(2+) as cofactor. It depends on L-ascorbate as a cofactor. As to expression, expressed in roots and shoots.

Its subcellular location is the cytoplasm. It carries out the reaction L-homoarginine + 2-oxoglutarate + O2 = 6-hydroxy-L-homoarginine + succinate + CO2. The enzyme catalyses melatonin + 2-oxoglutarate + O2 = 2-hydroxymelatonin + succinate + CO2. 2-oxoglutarate-dependent dioxygenase catalyzing homoarginine 6-hydroxylation thus producing 6-hydroxy-L-homoarginine. Guanidine (Gd) is in turn synthesized by the spontaneous conversion of 6-hydroxy-L-homoarginine to (S)-2-amino-6-oxohexanoate (RHEA:79843); guanidine is a nitrogen-rich compound that can serve as a defense or signaling substance. Involved in melatonin degradation. Catalyzes the hydroxylation of melatonin to produce 2-hydroxymelatonin. This Oryza sativa subsp. japonica (Rice) protein is Homoarginine-6-hydroxylase 2-ODD-233.